The sequence spans 306 residues: Porphobilinogen deaminase (306 aa).

Residue C234 is modified to S-(dipyrrolylmethanemethyl)cysteine.

This sequence belongs to the HMBS family. As to quaternary structure, monomer. Dipyrromethane serves as cofactor.

The catalysed reaction is 4 porphobilinogen + H2O = hydroxymethylbilane + 4 NH4(+). Its pathway is porphyrin-containing compound metabolism; protoporphyrin-IX biosynthesis; coproporphyrinogen-III from 5-aminolevulinate: step 2/4. Its function is as follows. Tetrapolymerization of the monopyrrole PBG into the hydroxymethylbilane pre-uroporphyrinogen in several discrete steps. The polypeptide is Porphobilinogen deaminase (Mycobacteroides abscessus (strain ATCC 19977 / DSM 44196 / CCUG 20993 / CIP 104536 / JCM 13569 / NCTC 13031 / TMC 1543 / L948) (Mycobacterium abscessus)).